Reading from the N-terminus, the 78-residue chain is NAD(P)H-quinone oxidoreductase subunit O (78 aa).

It belongs to the complex I NdhO subunit family. In terms of assembly, NDH-1 can be composed of about 15 different subunits; different subcomplexes with different compositions have been identified which probably have different functions.

It is found in the cellular thylakoid membrane. It carries out the reaction a plastoquinone + NADH + (n+1) H(+)(in) = a plastoquinol + NAD(+) + n H(+)(out). It catalyses the reaction a plastoquinone + NADPH + (n+1) H(+)(in) = a plastoquinol + NADP(+) + n H(+)(out). Its function is as follows. NDH-1 shuttles electrons from an unknown electron donor, via FMN and iron-sulfur (Fe-S) centers, to quinones in the respiratory and/or the photosynthetic chain. The immediate electron acceptor for the enzyme in this species is believed to be plastoquinone. Couples the redox reaction to proton translocation, and thus conserves the redox energy in a proton gradient. Cyanobacterial NDH-1 also plays a role in inorganic carbon-concentration. The chain is NAD(P)H-quinone oxidoreductase subunit O from Prochlorococcus marinus (strain MIT 9215).